Here is a 795-residue protein sequence, read N- to C-terminus: Myosin light chain kinase 3 (795 aa).

Ser155 is modified (phosphoserine). Disordered regions lie at residues 236–257 and 305–328; these read GPGQ…ASEN and SSGP…GDAL. Ser351 and Ser432 each carry phosphoserine. Residues 367-452 form a disordered region; sequence DQIPKGARPF…GPGRTEAGRL (86 aa). Residues 491 to 746 enclose the Protein kinase domain; the sequence is VSQHEVLGGG…ATQCLKHEWL (256 aa). Residues 497-505 and Lys520 contribute to the ATP site; that span reads LGGGRFGQV. Catalysis depends on Asp612, which acts as the Proton acceptor.

The protein belongs to the protein kinase superfamily. CAMK Ser/Thr protein kinase family. Mg(2+) is required as a cofactor. Phosphorylated on serine residues. In terms of tissue distribution, restricted to cardiomyocytes (at protein level). Down-regulated in heart after experimental myocardial infarction at the protein level; no significant changes at the mRNA level.

Its subcellular location is the cytoplasm. The catalysed reaction is L-seryl-[myosin light chain] + ATP = O-phospho-L-seryl-[myosin light chain] + ADP + H(+). The enzyme catalyses L-threonyl-[myosin light chain] + ATP = O-phospho-L-threonyl-[myosin light chain] + ADP + H(+). Kinase that phosphorylates MYL2 in vitro. Has been proposed to be calmodulin-dependent, although MYL2 phosphorylation has also been observed in the presence or absence of calmodulin. Promotes sarcomere formation in cardiomyocytes and increases cardiomyocyte contractility. The polypeptide is Myosin light chain kinase 3 (Mylk3) (Mus musculus (Mouse)).